A 448-amino-acid polypeptide reads, in one-letter code: DNA primase DnaG (448 aa).

Residues 186 to 260 (DSIIVVEGRN…EADFVARAPP (75 aa)) enclose the Toprim domain. Glutamate 192, aspartate 234, and aspartate 236 together coordinate Mg(2+). Positions 318–340 (AEVIEEPPEQPPKNEEIREEQSQ) are disordered. Residues 329-338 (PKNEEIREEQ) are compositionally biased toward basic and acidic residues.

This sequence belongs to the archaeal DnaG primase family. Forms a ternary complex with MCM helicase and DNA. Component of the archaeal exosome complex. It depends on Mg(2+) as a cofactor.

The catalysed reaction is ssDNA + n NTP = ssDNA/pppN(pN)n-1 hybrid + (n-1) diphosphate.. Functionally, RNA polymerase that catalyzes the synthesis of short RNA molecules used as primers for DNA polymerase during DNA replication. Also part of the exosome, which is a complex involved in RNA degradation. Acts as a poly(A)-binding protein that enhances the interaction between heteromeric, adenine-rich transcripts and the exosome. This is DNA primase DnaG from Thermoplasma acidophilum (strain ATCC 25905 / DSM 1728 / JCM 9062 / NBRC 15155 / AMRC-C165).